Consider the following 556-residue polypeptide: Formate--tetrahydrofolate ligase 1 (556 aa).

65-72 (TPAGEGKS) is an ATP binding site.

It belongs to the formate--tetrahydrofolate ligase family.

It catalyses the reaction (6S)-5,6,7,8-tetrahydrofolate + formate + ATP = (6R)-10-formyltetrahydrofolate + ADP + phosphate. Its pathway is one-carbon metabolism; tetrahydrofolate interconversion. The polypeptide is Formate--tetrahydrofolate ligase 1 (Streptococcus pyogenes serotype M1).